We begin with the raw amino-acid sequence, 162 residues long: UPF0305 protein MmarC7_1691 (162 aa).

This sequence belongs to the UPF0305 family.

The polypeptide is UPF0305 protein MmarC7_1691 (Methanococcus maripaludis (strain C7 / ATCC BAA-1331)).